The chain runs to 483 residues: Pre-glycoprotein polyprotein GP complex (483 aa).

Gly2 is lipidated: N-myristoyl glycine; by host. The Extracellular segment spans residues 2–17 (GQLVSFIGEIPAIVHE). The helical transmembrane segment at 18 to 32 (ALNVALIAVSIIAIM) threads the bilayer. A topological domain (cytoplasmic) is located at residue Lys33. A helical membrane pass occupies residues 34–53 (GLINIWKSGLFQLIMFLILA). Extracellular segments follow at residues 54–58 (GRSCS) and 59–422 (ISIG…SLVD). Cys57 contacts Zn(2+). Residues Asn73, Asn88, Asn130, and Asn179 are each glycosylated (N-linked (GlcNAc...) asparagine; by host). Cystine bridges form between Cys85–Cys223, Cys186–Cys204, Cys269–Cys282, Cys291–Cys300, and Cys354–Cys375. N-linked (GlcNAc...) asparagine; by host glycosylation is present at Asn216. Asn355, Asn363, Asn380, and Asn385 each carry an N-linked (GlcNAc...) asparagine; by host glycan. Residues 423 to 443 (LCFWSTLFYTASIFLHLLHIP) form a helical membrane-spanning segment. The Cytoplasmic segment spans residues 444 to 483 (THRHIIGEGCPKPHRLTSDSLCACGFFQLKGRPTRWARIP). Positions 445, 447, 453, 457, 465, and 467 each coordinate Zn(2+).

It belongs to the arenaviridae GPC protein family. Homotetramer; disulfide-linked. As to quaternary structure, homotetramer. GP2 homotetramers bind through ionic interactions with GP1 homotetramers to form the GP complex together with the stable signal peptide. The GP-C polyprotein interacts with the host protease MBTPS1/SKI-1 resulting in the polyprotein processing. In terms of processing, specific enzymatic cleavages in vivo yield mature proteins. GP-C polyprotein is cleaved in the endoplasmic reticulum by the host protease MBTPS1. Only cleaved glycoprotein is incorporated into virions. The SSP remains stably associated with the GP complex following cleavage by signal peptidase and plays crucial roles in the trafficking of GP through the secretory pathway. Post-translationally, myristoylation is necessary for GP2-mediated fusion activity.

The protein localises to the virion membrane. It is found in the host endoplasmic reticulum membrane. Its subcellular location is the host Golgi apparatus membrane. It localises to the host cell membrane. Class I viral fusion protein that directs fusion of viral and host endosomal membranes, leading to delivery of the nucleocapsid into the cytoplasm. Membrane fusion is mediated by irreversible conformational changes induced upon acidification in the endosome. In terms of biological role, stable signal peptide (SSP): cleaved and functions as a signal peptide. In addition, it is also retained as the third component of the GP complex. The SSP is required for efficient glycoprotein expression, post-translational maturation cleavage of GP1 and GP2, glycoprotein transport to the cell surface plasma membrane, formation of infectious virus particles, and acid pH-dependent glycoprotein-mediated cell fusion. Its function is as follows. Interacts with the host receptor. The polypeptide is Pre-glycoprotein polyprotein GP complex (Peromyscus californicus (California mouse)).